Reading from the N-terminus, the 621-residue chain is MALLQIAEPGQSPQPHQRRLAVGIDLGTTNSLVATLRSGLAESLKDTEGETILPSAVRYLPDGRVEVGRAAKAAAAVDPLNTVLSVKRLMGRGIADVKLLGEQLPYRFAEGESHMPFIETVQGPKSPVEVSAEILRVLRRRAEEALGGELVGAVITVPAYFDEAQRQATKDAARLAGLDVLRLLNEPTAAAVAYGLDRGAEGVVAIYDLGGGTFDISILRLTRGVFEVLATGGDSALGGDDFDHAIANWIVEQAGLSADLDPGVQRHLLQLACAAKEALSDSGSVALAYGPWQGELSRERFEALIEPLVARSLKACRRALRDAGIEPQEIAAVVMVGGSTRVPRVRRAAAELFDRQPLTDIDPDQVVAIGAALQADTLAGNGRDGEELLLLDVNPLSLGLETMGRLMEKVIPRNTTLPVARAQEFTTYKDGQTAMLIHVLQGERELVKDCRSLARFELRGIPPMVAGAAKIRVTFQVDADGLLNVSARELGSGIEASVQVKPSYGLTDGEIARMLKDSFEYAGGDKAARALREQQVEAQRLLEAVQAALEADGEALLSPAERAAIEAQMQALRGVLDGPDAAVIETHVRHLTQVTDAFAARRLDASVKAALSGRRLNEIEE.

The protein belongs to the heat shock protein 70 family.

Chaperone involved in the maturation of iron-sulfur cluster-containing proteins. Has a low intrinsic ATPase activity which is markedly stimulated by HscB. The chain is Chaperone protein HscA homolog from Azotobacter vinelandii (strain DJ / ATCC BAA-1303).